The primary structure comprises 162 residues: UPF0114 protein Sden_0436 (162 aa).

Helical transmembrane passes span 15–35 (IMAP…IKFF), 53–73 (LVLI…LIMV), and 136–156 (IMWY…MGYL).

It belongs to the UPF0114 family.

Its subcellular location is the cell membrane. The protein is UPF0114 protein Sden_0436 of Shewanella denitrificans (strain OS217 / ATCC BAA-1090 / DSM 15013).